Consider the following 320-residue polypeptide: Polyketide transferase FFUJ_12241 (320 aa).

The interval 58-298 (RDITCLAWDP…ILKGKGHLDW (241 aa)) is abhydrolase domain.

It belongs to the polyketide transferase af380 family.

In terms of biological role, polyketide transferase; part of the gene cluster that mediates the biosynthesis of fujikurins A-D, secondary metabolites playing a role during rice infection. The polyketide synthase PKS19 acts with the trans-enoyl reductase FFUJ_12240 and the polyketide transferase FFUJ_12241 to produce fujikurins, however, the biosynthesis pathway has not been identified yet. The chain is Polyketide transferase FFUJ_12241 from Gibberella fujikuroi (strain CBS 195.34 / IMI 58289 / NRRL A-6831) (Bakanae and foot rot disease fungus).